A 392-amino-acid chain; its full sequence is Tryptophan synthase beta chain (392 aa).

N6-(pyridoxal phosphate)lysine is present on lysine 84.

This sequence belongs to the TrpB family. As to quaternary structure, tetramer of two alpha and two beta chains. Pyridoxal 5'-phosphate serves as cofactor.

It catalyses the reaction (1S,2R)-1-C-(indol-3-yl)glycerol 3-phosphate + L-serine = D-glyceraldehyde 3-phosphate + L-tryptophan + H2O. The protein operates within amino-acid biosynthesis; L-tryptophan biosynthesis; L-tryptophan from chorismate: step 5/5. The beta subunit is responsible for the synthesis of L-tryptophan from indole and L-serine. This is Tryptophan synthase beta chain from Campylobacter jejuni subsp. doylei (strain ATCC BAA-1458 / RM4099 / 269.97).